The following is a 454-amino-acid chain: Asparagine--tRNA ligase (454 aa).

The protein belongs to the class-II aminoacyl-tRNA synthetase family. As to quaternary structure, homodimer.

It is found in the cytoplasm. It carries out the reaction tRNA(Asn) + L-asparagine + ATP = L-asparaginyl-tRNA(Asn) + AMP + diphosphate + H(+). The polypeptide is Asparagine--tRNA ligase (Ureaplasma urealyticum serovar 10 (strain ATCC 33699 / Western)).